Consider the following 258-residue polypeptide: Deoxyribose-phosphate aldolase (258 aa).

Catalysis depends on aspartate 101, which acts as the Proton donor/acceptor. Lysine 166 serves as the catalytic Schiff-base intermediate with acetaldehyde. Lysine 200 acts as the Proton donor/acceptor in catalysis.

It belongs to the DeoC/FbaB aldolase family. DeoC type 2 subfamily.

It is found in the cytoplasm. It carries out the reaction 2-deoxy-D-ribose 5-phosphate = D-glyceraldehyde 3-phosphate + acetaldehyde. Its pathway is carbohydrate degradation; 2-deoxy-D-ribose 1-phosphate degradation; D-glyceraldehyde 3-phosphate and acetaldehyde from 2-deoxy-alpha-D-ribose 1-phosphate: step 2/2. In terms of biological role, catalyzes a reversible aldol reaction between acetaldehyde and D-glyceraldehyde 3-phosphate to generate 2-deoxy-D-ribose 5-phosphate. This Actinobacillus pleuropneumoniae serotype 7 (strain AP76) protein is Deoxyribose-phosphate aldolase.